The chain runs to 216 residues: Thymidylate kinase (216 aa).

Glycine 10–threonine 17 contributes to the ATP binding site.

The protein belongs to the thymidylate kinase family.

It carries out the reaction dTMP + ATP = dTDP + ADP. Phosphorylation of dTMP to form dTDP in both de novo and salvage pathways of dTTP synthesis. The protein is Thymidylate kinase of Prochlorococcus marinus (strain MIT 9313).